A 509-amino-acid chain; its full sequence is Maturase K (509 aa).

This sequence belongs to the intron maturase 2 family. MatK subfamily.

It is found in the plastid. The protein resides in the chloroplast. Usually encoded in the trnK tRNA gene intron. Probably assists in splicing its own and other chloroplast group II introns. This Abies firma (Momi fir) protein is Maturase K.